We begin with the raw amino-acid sequence, 494 residues long: Cytochrome P450 monooxygenase acrF (494 aa).

Cys-420 serves as a coordination point for heme.

Belongs to the cytochrome P450 family. Requires heme as cofactor.

Its pathway is secondary metabolite biosynthesis. In terms of biological role, cytochrome P450 monooxygenase; part of the cluster that mediates the biosynthesis of acurin A, a highly reduced polyketide coupled to a serine via a peptide bond. The activities of the highly reducing polyketide synthase acrA and the nonribosomal peptide synthetase acrB are collectively responsible for the synthesis of the acurin A core structure with a heptaketide backbone produced by acrA covalently fused to a L-serine by acrB. After the formation of the PK-NRP hybrid product, it is detached from acrB by reductive release to set up the formation of the lactam ring by aldol condensation. The hydrolyase acrC then catalyzes water loss to generate a double bond in the ring. This double bond is probably reduced, which is followed by three oxidations at C-22 to generate the carboxylic acid moiety, involving probably the FAD-binding monooxygenase acrE and the cytochrome P450 monooxygenases acrD and acrF. Finally, a last methylation step performed by the O-methyltransferase acrG leads to the production of acurin A. The sequence is that of Cytochrome P450 monooxygenase acrF from Aspergillus aculeatus (strain ATCC 16872 / CBS 172.66 / WB 5094).